The sequence spans 665 residues: MPRRAPAFPLSDIKAQMLFANNIKAQQASKRSFKEGAIETYEGLLSVDPRFLSFKNELSRYLTDHFPANVDEYGRVYGNGVRTNFFGMRHMNGFPMIPATWPLASNLKKRADADLADGPVSERDNLLFRAAVRLMFSDLEPVPLKIRKGSSTCIPYFSNDMGTKIEIAERALEKAEEAGNLMLQGKFDDAYQLHQMGGAYYVVYRAQSTDAITLDPKTGKFVSKDRMVADFEYAVTGGEQGSLFAASKDASRLKEQYGIDVPDGFFCERRRTAMGGPFALNAPIMAVAQPVRNKIYSKYAYTFHHTTRLNKEEKVKEWSLCVATDVSDHDTFWPGWLRDLICDELLNMGYAPWWVKLFETSLKLPVYVGAPAPEQGHTLLGDPSNPDLEVGLSSGQGATDLMGTLLMSITYLVMQLDHTAPHLNSRIKDMPSACRFLDSYWQGHEEIRQISKSDDAILGWTKGRALVGGHRLFEMLKEGKVNPSPYMKISYEHGGAFLGDILLYDSRREPGSAIFVGNINSMLNNQFSPEYGVQSGVRDRSKRKRPFPGLAWASMKDTYGACPIYSDVLEAIERCWWNAFGESYRAYREDMLKRDTLELSRYVASMARQAGLAELTPIDLEVLADPNKLQYKWTEADVSANIHEVLMHGVSVEKTERFLRSVMPR.

Residues 310-485 enclose the RdRp catalytic domain; that stretch reads NKEEKVKEWS…LKEGKVNPSP (176 aa). Positions 454, 491, and 495 each coordinate Mg(2+).

In terms of assembly, part of the packaging complex composed of RDRP, P4 and P7. Interacts with P7. Requires Mg(2+) as cofactor. The cofactor is Mn(2+).

Its subcellular location is the virion. The enzyme catalyses RNA(n) + a ribonucleoside 5'-triphosphate = RNA(n+1) + diphosphate. Its function is as follows. Rna-dependent RNA polymerase part of the packaging complex that packages the viral RNA segments, replicate them into a double-stranded form and transcribe them. This is RNA-directed RNA polymerase (P2) from Pseudomonas phage phi6 (Bacteriophage phi-6).